Reading from the N-terminus, the 462-residue chain is tRNA(Ile)-lysidine synthase (462 aa).

27 to 32 is a binding site for ATP; sequence SGGPDS.

The protein belongs to the tRNA(Ile)-lysidine synthase family.

The protein localises to the cytoplasm. The enzyme catalyses cytidine(34) in tRNA(Ile2) + L-lysine + ATP = lysidine(34) in tRNA(Ile2) + AMP + diphosphate + H(+). Ligates lysine onto the cytidine present at position 34 of the AUA codon-specific tRNA(Ile) that contains the anticodon CAU, in an ATP-dependent manner. Cytidine is converted to lysidine, thus changing the amino acid specificity of the tRNA from methionine to isoleucine. The polypeptide is tRNA(Ile)-lysidine synthase (Clostridioides difficile (strain 630) (Peptoclostridium difficile)).